The following is a 193-amino-acid chain: Large ribosomal subunit protein uL5 (193 aa).

This sequence belongs to the universal ribosomal protein uL5 family. In terms of assembly, part of the 50S ribosomal subunit; part of the 5S rRNA/L5/L18/L25 subcomplex. Contacts the 5S rRNA and the P site tRNA. Forms a bridge to the 30S subunit in the 70S ribosome.

Functionally, this is one of the proteins that bind and probably mediate the attachment of the 5S RNA into the large ribosomal subunit, where it forms part of the central protuberance. In the 70S ribosome it contacts protein S13 of the 30S subunit (bridge B1b), connecting the 2 subunits; this bridge is implicated in subunit movement. Contacts the P site tRNA; the 5S rRNA and some of its associated proteins might help stabilize positioning of ribosome-bound tRNAs. This Novosphingobium aromaticivorans (strain ATCC 700278 / DSM 12444 / CCUG 56034 / CIP 105152 / NBRC 16084 / F199) protein is Large ribosomal subunit protein uL5.